The primary structure comprises 99 residues: Large ribosomal subunit protein uL23 (99 aa).

This sequence belongs to the universal ribosomal protein uL23 family. In terms of assembly, part of the 50S ribosomal subunit. Contacts protein L29, and trigger factor when it is bound to the ribosome.

One of the early assembly proteins it binds 23S rRNA. One of the proteins that surrounds the polypeptide exit tunnel on the outside of the ribosome. Forms the main docking site for trigger factor binding to the ribosome. In Pseudomonas fluorescens (strain SBW25), this protein is Large ribosomal subunit protein uL23.